The primary structure comprises 351 residues: Peroxisomal membrane protein PEX14 (351 aa).

The disordered stretch occupies residues K54–P75. Residues V60–V70 show a composition bias toward low complexity. The SH3-binding signature appears at A83 to W91. The segment at A243 to A351 is disordered. A compositionally biased stretch (polar residues) spans Q245–S258. Basic and acidic residues predominate over residues V283–N293. Over residues S294 to R303 the composition is skewed to polar residues. Residues S320–G334 are compositionally biased toward low complexity.

The protein belongs to the peroxin-14 family. As to quaternary structure, interacts with PEX13 (via SH3 domain); forming the PEX13-PEX14 docking complex. Interacts with PEX5 (via WxxxF/Y motifs).

It localises to the peroxisome membrane. In terms of biological role, component of the PEX13-PEX14 docking complex, a translocon channel that specifically mediates the import of peroxisomal cargo proteins bound to PEX5 receptor. The PEX13-PEX14 docking complex forms a large import pore which can be opened to a diameter of about 9 nm. Mechanistically, PEX5 receptor along with cargo proteins associates with the PEX14 subunit of the PEX13-PEX14 docking complex in the cytosol, leading to the insertion of the receptor into the organelle membrane with the concomitant translocation of the cargo into the peroxisome matrix. In Pichia angusta (Yeast), this protein is Peroxisomal membrane protein PEX14.